A 592-amino-acid polypeptide reads, in one-letter code: Bifunctional purine biosynthesis protein ATIC (592 aa).

Met-1 carries the post-translational modification N-acetylmethionine. The MGS-like domain maps to 1 to 146; that stretch reads MAPSQLALFS…KNHARVTVVC (146 aa). An IMP cyclohydrolase region spans residues 1 to 198; that stretch reads MAPSQLALFS…ISDYFRKQYS (198 aa). IMP-binding positions include 12–14, 34–37, 64–67, 101–102, and 125–126; these read SDK, SGGT, RVKT, CN, and DI. Lys-137 (proton donor/acceptor; for FAICAR cyclization activity) is an active-site residue. Lys-199 carries the post-translational modification N6-acetyllysine. Positions 199–592 are AICAR formyltransferase; that stretch reads KGISQMPLRY…AHTDLRLFHH (394 aa). 5-amino-1-(5-phospho-beta-D-ribosyl)imidazole-4-carboxamide-binding positions include 207–208, His-267, Gly-316, Asp-339, Asn-431, and Arg-451; that span reads RY. The Proton acceptor; for AICAR formyltransferase activity role is filled by His-267. Ile-452 is a (6R)-10-formyltetrahydrofolate binding site. A 5-amino-1-(5-phospho-beta-D-ribosyl)imidazole-4-carboxamide-binding site is contributed by Phe-541. Residues Asp-546 and 565–566 each bind (6R)-10-formyltetrahydrofolate; that span reads ST. A 5-amino-1-(5-phospho-beta-D-ribosyl)imidazole-4-carboxamide-binding site is contributed by Arg-588.

It belongs to the PurH family. As to quaternary structure, homodimer. Associates with internalized INSR complexes on Golgi/endosomal membranes. Interacts with INSR; ATIC together with PRKAA2/AMPK2 and HACD3/PTPLAD1 is proposed to be part of a signaling network regulating INSR autophosphorylation and endocytosis.

The protein resides in the cytoplasm. It localises to the cytosol. It catalyses the reaction (6R)-10-formyltetrahydrofolate + 5-amino-1-(5-phospho-beta-D-ribosyl)imidazole-4-carboxamide = 5-formamido-1-(5-phospho-D-ribosyl)imidazole-4-carboxamide + (6S)-5,6,7,8-tetrahydrofolate. It carries out the reaction 10-formyldihydrofolate + 5-amino-1-(5-phospho-beta-D-ribosyl)imidazole-4-carboxamide = 5-formamido-1-(5-phospho-D-ribosyl)imidazole-4-carboxamide + 7,8-dihydrofolate. The enzyme catalyses IMP + H2O = 5-formamido-1-(5-phospho-D-ribosyl)imidazole-4-carboxamide. Its pathway is purine metabolism; IMP biosynthesis via de novo pathway; 5-formamido-1-(5-phospho-D-ribosyl)imidazole-4-carboxamide from 5-amino-1-(5-phospho-D-ribosyl)imidazole-4-carboxamide (10-formyl THF route): step 1/1. It participates in purine metabolism; IMP biosynthesis via de novo pathway; IMP from 5-formamido-1-(5-phospho-D-ribosyl)imidazole-4-carboxamide: step 1/1. With respect to regulation, AMP and XMP inhibit AICAR formyltransferase activity. AICAR formyltransferase activity is inhibited by N-(6-fluoro-1-oxo-1,2-dihydroisoquinolin-7-yl)-5- [(3R)-3-hydroxypyrrolidin-1-yl]thiophene-2-sulfonamide (LSN 3213128), which acts as a tumor suppression in cancer cell lines. In terms of biological role, bifunctional enzyme that catalyzes the last two steps of purine biosynthesis. Acts as a transformylase that incorporates a formyl group to the AMP analog AICAR (5-amino-1-(5-phospho-beta-D-ribosyl)imidazole-4-carboxamide) to produce the intermediate formyl-AICAR (FAICAR). Also displays cyclohydrolase activity involving the cyclization of FAICAR to inosine monophosphate (IMP). Can use both 10-formyldihydrofolate and 10-formyltetrahydrofolate as the formyl donor in this reaction. Also catalyzes the cyclization of FAICAR to IMP. Promotes insulin receptor/INSR autophosphorylation and is involved in INSR internalization. The sequence is that of Bifunctional purine biosynthesis protein ATIC (Atic) from Mus musculus (Mouse).